The chain runs to 211 residues: tRNA (pseudouridine(54)-N(1))-methyltransferase (211 aa).

S-adenosyl-L-methionine is bound by residues leucine 128, glycine 150, and cysteine 183.

Belongs to the methyltransferase superfamily. TrmY family. In terms of assembly, homodimer.

The protein localises to the cytoplasm. It catalyses the reaction pseudouridine(54) in tRNA + S-adenosyl-L-methionine = N(1)-methylpseudouridine(54) in tRNA + S-adenosyl-L-homocysteine + H(+). Its function is as follows. Specifically catalyzes the N1-methylation of pseudouridine at position 54 (Psi54) in tRNAs. The polypeptide is tRNA (pseudouridine(54)-N(1))-methyltransferase (Methanosarcina acetivorans (strain ATCC 35395 / DSM 2834 / JCM 12185 / C2A)).